The chain runs to 190 residues: Threonylcarbamoyl-AMP synthase (190 aa).

Residues 7–190 enclose the YrdC-like domain; the sequence is ADAISFIVDV…ALTGELFRQG (184 aa).

It belongs to the SUA5 family. TsaC subfamily.

It is found in the cytoplasm. It catalyses the reaction L-threonine + hydrogencarbonate + ATP = L-threonylcarbamoyladenylate + diphosphate + H2O. In terms of biological role, required for the formation of a threonylcarbamoyl group on adenosine at position 37 (t(6)A37) in tRNAs that read codons beginning with adenine. Catalyzes the conversion of L-threonine, HCO(3)(-)/CO(2) and ATP to give threonylcarbamoyl-AMP (TC-AMP) as the acyladenylate intermediate, with the release of diphosphate. The chain is Threonylcarbamoyl-AMP synthase from Cronobacter sakazakii (strain ATCC BAA-894) (Enterobacter sakazakii).